We begin with the raw amino-acid sequence, 576 residues long: Coilin (576 aa).

The residue at position 105 (Ser105) is a Phosphoserine. Position 122 is a phosphothreonine (Thr122). Disordered regions lie at residues Asp125–Ser330 and Arg352–Ala389. Residues Lys127, Lys151, and Lys160 each participate in a glycyl lysine isopeptide (Lys-Gly) (interchain with G-Cter in SUMO2) cross-link. Phosphoserine; by VRK1 and VRK2 is present on Ser184. Glycyl lysine isopeptide (Lys-Gly) (interchain with G-Cter in SUMO2) cross-links involve residues Lys204 and Lys209. Polar residues predominate over residues Gln214 to Asn225. The 1-1 repeat unit spans residues Ala223–Ser226. A 2 X 4 AA repeats of A-R-N-S region spans residues Ala223–Ser271. Residues Ser235–Ser250 show a composition bias toward low complexity. A phosphoserine mark is found at Ser248, Ser250, Ser256, Ser271, and Ser272. One copy of the 1-2 repeat lies at Ala268–Ser271. The segment covering Asn270–Ser285 has biased composition (basic and acidic residues). Residues Lys274 and Lys281 each participate in a glycyl lysine isopeptide (Lys-Gly) (interchain with G-Cter in SUMO2) cross-link. A Phosphothreonine modification is found at Thr290. Residues Lys293 and Lys297 each participate in a glycyl lysine isopeptide (Lys-Gly) (interchain with G-Cter in SUMO2) cross-link. Position 301 is a phosphoserine (Ser301). Residues Ser301–Ser320 show a composition bias toward low complexity. Residue Thr303 is modified to Phosphothreonine. The 2-1 repeat unit spans residues Ser386–Ala389. The interval Ser386–Ala520 is 2 X 4 AA repeats of S-L-P-A. The required for interaction with SMN stretch occupies residues Gly392–Gly420. The residue at position 403 (Ser403) is a Phosphoserine. 4 tandem repeats follow at residues Arg413–Gly414, Arg415–Gly416, Arg417–Gly418, and Arg419–Gly420. Residues Arg413–Gly420 form a 4 X 2 AA tandem repeats of R-G region. Residue Lys444 forms a Glycyl lysine isopeptide (Lys-Gly) (interchain with G-Cter in SUMO2) linkage. Thr456 is subject to Phosphothreonine. Positions Asp460 to Asp559 constitute a Tudor; atypical domain. Phosphoserine occurs at positions 487 and 489. Lys496 participates in a covalent cross-link: Glycyl lysine isopeptide (Lys-Gly) (interchain with G-Cter in SUMO2). The stretch at Ser517 to Ala520 is one 2-2 repeat. The residue at position 566 (Ser566) is a Phosphoserine.

It belongs to the coilin family. In terms of assembly, interacts with ANKS1B. Interacts with SMN1 (via Tudor domain). Interacts (via C-terminus) with AK6. Interacts with WRAP53/TCAB1. Interacts with HMBOX1. Interacts with PSME3; the interaction is inhibited by PSME3IP1. Interacts wit UBL5. In terms of processing, symmetrical dimethylation of arginine residues within the RG repeat region enhances affinity for SMN, and thus localization of SMN complexes to CBs. Post-translationally, phosphorylated by VRK1. Phosphorylation during mitosis is associated with disassembly of CBs. In terms of tissue distribution, found in all the cell types examined.

It is found in the nucleus. The protein localises to the cajal body. Functionally, component of nuclear coiled bodies, also known as Cajal bodies or CBs, which are involved in the modification and assembly of nucleoplasmic snRNPs. The polypeptide is Coilin (COIL) (Homo sapiens (Human)).